The primary structure comprises 178 residues: MARVEIEIPDDVTAEVDHLDLTVEGPEGSVTRRLWYPDVDVSVEDDAVVVASEVDDAKTDSTVGTFESHVANMFHGVSEGWEYKLEVHYSHFPMQVDVEGEEVVIQNFLGEKAARRTQIRGDTDVVVDDEEVTLSGPSIEDVGQTAADIEQLTRVTDKDTRVFQDGVYIVEKPAKGGA.

This sequence belongs to the universal ribosomal protein uL6 family. As to quaternary structure, part of the 50S ribosomal subunit.

In terms of biological role, this protein binds to the 23S rRNA, and is important in its secondary structure. It is located near the subunit interface in the base of the L7/L12 stalk, and near the tRNA binding site of the peptidyltransferase center. The chain is Large ribosomal subunit protein uL6 from Halobacterium salinarum (strain ATCC 700922 / JCM 11081 / NRC-1) (Halobacterium halobium).